The sequence spans 1167 residues: mRNA 3'-end-processing protein rna-14 (1167 aa).

Positions 1–245 are disordered; the sequence is MSDDYDPTNI…DPTPVTQPAP (245 aa). Composition is skewed to acidic residues over residues 16 to 26 and 70 to 79; these read EEQEDYGEADG and NTDDVGDDYD. Over residues 102–111 the composition is skewed to low complexity; the sequence is TAPQPAAPVA. Residues 124–137 are compositionally biased toward acidic residues; it reads DSDDEDEDGDDDGE. Composition is skewed to low complexity over residues 138-150 and 159-191; these read PQQQQQQQQQQQP and GSGASSSGGSAPAPASASATAAPQSHSPAPQTA. The segment covering 192-218 has biased composition (polar residues); sequence TLTVQDNAGATTFNAPPVPQQVSHQSG. Low complexity predominate over residues 219–245; it reads ATTAAVPTTPSSAAPAVDPTPVTQPAP. HAT repeat units lie at residues 277 to 309, 311 to 342, 352 to 387, 401 to 434, 471 to 504, and 518 to 550; these read NDIDGARQVYERFLAIFPQAADIWVEYLDLELS, NNFPQAEGIFAKCLMTTPNVNLWTRYLDYIRR, QARQTVSQAYEFVIDNIGLDKDSGKIWAEYIQFIKF, QKMDQLRKAYQRAICVPISNVNTLWKEYDQFEMG, TNLPRLPPAPGFDGDQEFMEQVEIWKKWIAWEKS, and LYQKRILYVYNQALMALRFWPEMWVDAAQWCFD. Residues 882 to 893 are compositionally biased toward polar residues; the sequence is QQQPQLPMSQRD. 2 disordered regions span residues 882 to 980 and 1075 to 1167; these read QQQP…SGAG and AYRE…PPPY. Positions 908 to 922 are enriched in low complexity; that stretch reads SPSAGPGAPFAPYAA. Basic and acidic residues predominate over residues 924-946; the sequence is RPLDDRDYDDHPRKIARSEHDPF. Residues 969 to 979 are compositionally biased toward gly residues; sequence GAAGAYSGSGA. Positions 1079 to 1090 are enriched in low complexity; the sequence is SPGPLGGRPLSP. Residues 1121-1134 show a composition bias toward pro residues; that stretch reads EPPPAAQYGVPPPA. Low complexity predominate over residues 1135–1151; sequence QYDGGWAQQQQQQQYGQ.

It is found in the nucleus. The protein resides in the cytoplasm. Component of the cleavage factor IA (CFIA) complex, which is involved in the endonucleolytic cleavage during polyadenylation-dependent pre-mRNA 3'-end formation. This is mRNA 3'-end-processing protein rna-14 (rna-14) from Neurospora crassa (strain ATCC 24698 / 74-OR23-1A / CBS 708.71 / DSM 1257 / FGSC 987).